Here is a 510-residue protein sequence, read N- to C-terminus: MVKLEVYLEKQKFRQQYFVYPLLFQEYIYAFAHDHGLNGSEPVEILGRNNNKFSSVLVKRLIIRMYQQNFGINSVNHPNQNRLLDHNNYFYSQFYSHILSEGFAIVVEIPFSLRVLSCPEEKEIPKFQNLRSIHSLFPFLEDQFLHLHYISHIEIPYPIHLEIVVQLLQCRIQDVASLHLLRFFLNYYSNWNSLIISMKLIFLLKKENKRLFRFLYNSYVSECEFFFFFLRKQSSCLRLTSYGTFLERIHFYRKKEHFWVMYPGFFRKTLWVFMDPLMHYVRYQGKAILASKGTPLLMKKWKCYLANFWQYYFHFWIQPRRIQQKPLANSCFDFLGYLSSVTRNPLVVRNQMLENAFLIDTRIKKLDTIVPAISLIGSLSKAQFCTGSGHPISKPIWTDLSDWDILDRFGRICRNIFHYYSGSSKKQTLYRIKYILRLSCARTLARKHKSTVRTFMQRLGSVFLEEFFTEEEQVLSLIFTKTIPFSFHGSHSKRIWYLDIIRINDLVNYS.

The protein belongs to the intron maturase 2 family. MatK subfamily.

It is found in the plastid. The protein localises to the chloroplast. Functionally, usually encoded in the trnK tRNA gene intron. Probably assists in splicing its own and other chloroplast group II introns. This is Maturase K from Anomochloa marantoidea (Herbaceous bamboo).